A 793-amino-acid polypeptide reads, in one-letter code: Phenylalanine--tRNA ligase beta subunit (793 aa).

In terms of domain architecture, tRNA-binding spans 39-148; that stretch reads AAPFKGVKAA…EGDFPGVDLH (110 aa). Residues 401–476 enclose the B5 domain; the sequence is PPQATIILRK…RLYGYDRLPS (76 aa). Mg(2+) is bound by residues aspartate 454, aspartate 460, glutamate 463, and glutamate 464. Positions 699–792 constitute an FDX-ACB domain; the sequence is SKFPAIRRDI…LVTELGAIIR (94 aa).

This sequence belongs to the phenylalanyl-tRNA synthetase beta subunit family. Type 1 subfamily. As to quaternary structure, tetramer of two alpha and two beta subunits. Mg(2+) serves as cofactor.

It is found in the cytoplasm. The catalysed reaction is tRNA(Phe) + L-phenylalanine + ATP = L-phenylalanyl-tRNA(Phe) + AMP + diphosphate + H(+). The protein is Phenylalanine--tRNA ligase beta subunit of Nitrosococcus oceani (strain ATCC 19707 / BCRC 17464 / JCM 30415 / NCIMB 11848 / C-107).